The following is a 648-amino-acid chain: Spastin (648 aa).

Topologically, residues 1–40 (MASTVALLRDSSDDRENFDDGETDCVQVGRKRKLTVFFYP) are cytoplasmic. Residues 41–61 (LLLVFWLLRWVFYQFFLVLCF) constitute an intramembrane region (helical). Over 62 to 648 (VCRGFVPRRH…WNREFGDITV (587 aa)) the chain is Cytoplasmic. The MIT domain maps to 99 to 174 (HKKAFDFISK…EMARDRLDFL (76 aa)). Residues 188-346 (PWHGGVAPAQ…SQRSLLSSRV (159 aa)) are disordered. The span at 247–266 (TGVTLRRQQQQQLGGVSTVS) shows a compositional bias: low complexity. Residue 414–421 (GPPGNGKT) participates in ATP binding.

It belongs to the AAA ATPase family. Spastin subfamily. In terms of assembly, homohexamer. The homohexamer is stabilized by ATP-binding. The homohexamer may adopt a ring conformation through which microtubules pass prior to being severed. Interacts with microtubules.

It localises to the membrane. Its subcellular location is the cytoplasm. The protein resides in the cytoskeleton. The protein localises to the microtubule organizing center. It is found in the centrosome. The catalysed reaction is n ATP + n H2O + a microtubule = n ADP + n phosphate + (n+1) alpha/beta tubulin heterodimers.. In terms of biological role, ATP-dependent microtubule severing protein. Microtubule severing may promote reorganization of cellular microtubule arrays and the release of microtubules from the microtubule organizing center following nucleation. The sequence is that of Spastin (spas) from Ixodes scapularis (Black-legged tick).